Reading from the N-terminus, the 124-residue chain is Fluoride-specific ion channel FluC (124 aa).

The next 3 membrane-spanning stretches (helical) occupy residues 36–56 (VGTM…VVVL), 63–83 (YAPF…AFSL), and 99–119 (AYVG…MAAV). 2 residues coordinate Na(+): G73 and T76.

Belongs to the fluoride channel Fluc/FEX (TC 1.A.43) family.

It is found in the cell inner membrane. It catalyses the reaction fluoride(in) = fluoride(out). With respect to regulation, na(+) is not transported, but it plays an essential structural role and its presence is essential for fluoride channel function. Fluoride-specific ion channel. Important for reducing fluoride concentration in the cell, thus reducing its toxicity. This Cereibacter sphaeroides (strain ATCC 17029 / ATH 2.4.9) (Rhodobacter sphaeroides) protein is Fluoride-specific ion channel FluC.